The primary structure comprises 475 residues: B-type cell cycle switch protein ccs52A (475 aa).

The interval 1–29 is disordered; the sequence is MDGTGNRNPPPTSTVGDNSPPPEPSPESL. The PEST motif signature appears at 7–28; the sequence is RNPPPTSTVGDNSPPPEPSPES. 2 positions are modified to phosphoserine: Ser43 and Ser45. The short motif at 51-57 is the C-box element; the sequence is DRFIPSR. Positions 80-91 match the CSM motif motif; sequence AYTTLLRTALFG. Position 99 is a phosphothreonine (Thr99). Phosphoserine is present on residues Ser144 and Ser155. WD repeat units lie at residues 166–203, 207–246, 249–289, 290–329, 332–374, 376–417, and 420–459; these read QDDF…VTKL, GVDD…KIRS, GHRL…SKLS, GHKS…PVLK, EHTA…HLSC, DTGS…KLAT, and GHTY…KSQN. Ser454 is subject to Phosphoserine.

Belongs to the WD repeat CDC20/Fizzy family. Mostly expressed in nodules, and, to a lower extent, in root tips, stems, hypocotyls, leaves, flower buds and flowers.

It is found in the nucleus. It functions in the pathway protein modification; protein ubiquitination. In terms of biological role, component of the anaphase promoting complex/cyclosome (APC/C), a cell cycle-regulated E3 ubiquitin-protein ligase complex that controls progression through mitosis and the G1 phase of the cell cycle. Required to switch form cell proliferation to cell differentiation, endoreduplication and ploidy-dependent cell enlargement, including during nodulation, before nodule differentiation. Involved in root-knot nematode Meloidogyne incognita giant cells formation. The chain is B-type cell cycle switch protein ccs52A from Medicago truncatula (Barrel medic).